A 396-amino-acid polypeptide reads, in one-letter code: Elongation factor Tu (396 aa).

In terms of domain architecture, tr-type G spans 10–205 (KPHVNIGTIG…AVDESIPDPV (196 aa)). The segment at 19–26 (GHVDHGKT) is G1. Residue 19-26 (GHVDHGKT) coordinates GTP. T26 provides a ligand contact to Mg(2+). Residues 62–66 (GITIN) form a G2 region. The segment at 83 to 86 (DAPG) is G3. GTP is bound by residues 83–87 (DAPGH) and 138–141 (NKAD). The tract at residues 138–141 (NKAD) is G4. The G5 stretch occupies residues 175–177 (SAL).

This sequence belongs to the TRAFAC class translation factor GTPase superfamily. Classic translation factor GTPase family. EF-Tu/EF-1A subfamily. In terms of assembly, monomer.

The protein resides in the cytoplasm. It carries out the reaction GTP + H2O = GDP + phosphate + H(+). In terms of biological role, GTP hydrolase that promotes the GTP-dependent binding of aminoacyl-tRNA to the A-site of ribosomes during protein biosynthesis. This Rhodococcus erythropolis (strain PR4 / NBRC 100887) protein is Elongation factor Tu.